An 874-amino-acid polypeptide reads, in one-letter code: AP-1 complex subunit gamma-1 (874 aa).

In terms of domain architecture, GAE spans Thr761 to Ser873.

The protein belongs to the adaptor complexes large subunit family. As to quaternary structure, adaptor protein complex 1 (AP-1) is a heterotetramer composed of two large adaptins (gamma-type subunit APL4 and beta-type subunit APL2), a medium adaptin (mu-type subunit APM1) and a small adaptin (sigma-type subunit APS1). AP-1 interacts with clathrin.

The protein resides in the cytoplasmic vesicle. Its subcellular location is the clathrin-coated vesicle membrane. It is found in the golgi apparatus. Functionally, adaptins are components of the adaptor complexes which link clathrin to receptors in coated vesicles. Clathrin-associated protein complexes are believed to interact with the cytoplasmic tails of membrane proteins, leading to their selection and concentration. The AP-1 complex interacts directly with clathrin. Required for apical growth extension. This chain is AP-1 complex subunit gamma-1 (APL4), found in Mycosarcoma maydis (Corn smut fungus).